A 142-amino-acid chain; its full sequence is Large ribosomal subunit protein bL17 (142 aa).

This sequence belongs to the bacterial ribosomal protein bL17 family. Part of the 50S ribosomal subunit. Contacts protein L32.

The sequence is that of Large ribosomal subunit protein bL17 from Rickettsia bellii (strain OSU 85-389).